Reading from the N-terminus, the 317-residue chain is Lipoyl synthase (317 aa).

Residues 1–21 (MVTVIDTLARPRHPEKANRPE) form a disordered region. Over residues 12 to 21 (RHPEKANRPE) the composition is skewed to basic and acidic residues. Residues Cys57, Cys62, Cys68, Cys83, Cys87, Cys90, and Ser296 each coordinate [4Fe-4S] cluster. Residues 69 to 285 (WEKKHATFMI…ETVAYAKGFL (217 aa)) form the Radical SAM core domain.

This sequence belongs to the radical SAM superfamily. Lipoyl synthase family. [4Fe-4S] cluster is required as a cofactor.

It is found in the cytoplasm. It catalyses the reaction [[Fe-S] cluster scaffold protein carrying a second [4Fe-4S](2+) cluster] + N(6)-octanoyl-L-lysyl-[protein] + 2 oxidized [2Fe-2S]-[ferredoxin] + 2 S-adenosyl-L-methionine + 4 H(+) = [[Fe-S] cluster scaffold protein] + N(6)-[(R)-dihydrolipoyl]-L-lysyl-[protein] + 4 Fe(3+) + 2 hydrogen sulfide + 2 5'-deoxyadenosine + 2 L-methionine + 2 reduced [2Fe-2S]-[ferredoxin]. The protein operates within protein modification; protein lipoylation via endogenous pathway; protein N(6)-(lipoyl)lysine from octanoyl-[acyl-carrier-protein]: step 2/2. In terms of biological role, catalyzes the radical-mediated insertion of two sulfur atoms into the C-6 and C-8 positions of the octanoyl moiety bound to the lipoyl domains of lipoate-dependent enzymes, thereby converting the octanoylated domains into lipoylated derivatives. The sequence is that of Lipoyl synthase from Xanthobacter autotrophicus (strain ATCC BAA-1158 / Py2).